The sequence spans 311 residues: 2-phospho-L-lactate transferase (311 aa).

Residues Asp52 and Arg91 each coordinate 7,8-didemethyl-8-hydroxy-5-deazariboflavin.

This sequence belongs to the CofD family. Homodimer. Mg(2+) is required as a cofactor.

The catalysed reaction is (2S)-lactyl-2-diphospho-5'-guanosine + 7,8-didemethyl-8-hydroxy-5-deazariboflavin = oxidized coenzyme F420-0 + GMP + H(+). It functions in the pathway cofactor biosynthesis; coenzyme F420 biosynthesis. Inhibited by EDTA in vitro. In terms of biological role, catalyzes the transfer of the 2-phospholactate moiety from (2S)-lactyl-2-diphospho-5'-guanosine to 7,8-didemethyl-8-hydroxy-5-deazariboflavin (FO) with the formation of oxidized coenzyme F420-0 and GMP. This chain is 2-phospho-L-lactate transferase, found in Methanocaldococcus jannaschii (strain ATCC 43067 / DSM 2661 / JAL-1 / JCM 10045 / NBRC 100440) (Methanococcus jannaschii).